The sequence spans 73 residues: MIEVVVNDRLGKKVRVKCLAEDSVGDFKKVLSLQIGTQPNKIVLQKGGSVLKDHISLEDYEVHDQTNLELYYL.

A Ubiquitin-like domain is found at Met-1–Leu-73.

Forms conjugate with SPH1 and HBT1. Involved in morphogenesis. This is Ubiquitin-like modifier HUB1 (HUB1) from Saccharomyces cerevisiae (strain ATCC 204508 / S288c) (Baker's yeast).